The chain runs to 201 residues: uncharacterized protein (201 aa).

The N-terminal stretch at 1–23 is a signal peptide; that stretch reads MKILYFIFVIIINILLILNHVKS. The Extracellular segment spans residues 24–178; it reads KYNTFIFENT…GNYGEDPQRN (155 aa). N-linked (GlcNAc...) asparagine glycans are attached at residues Asn-114 and Asn-134. Positions 122 to 157 are disordered; the sequence is TPETPSPTENAPNTSGGSSEGNHYTYKSSSSSSEHI. Residues 123–148 show a composition bias toward polar residues; it reads PETPSPTENAPNTSGGSSEGNHYTYK. Residues 179–199 form a helical membrane-spanning segment; it reads IGISLSSSLIFISILFLIIFI. The Cytoplasmic portion of the chain corresponds to 200–201; the sequence is NN.

The protein localises to the membrane. This is an uncharacterized protein from Dictyostelium discoideum (Social amoeba).